Consider the following 97-residue polypeptide: YcgL domain-containing protein Pmen_1774 (97 aa).

The 85-residue stretch at 3-87 (RICSIYKSPR…PEEDYIQHLP (85 aa)) folds into the YcgL domain.

This Ectopseudomonas mendocina (strain ymp) (Pseudomonas mendocina) protein is YcgL domain-containing protein Pmen_1774.